The following is a 210-amino-acid chain: Oxygen-insensitive NADPH nitroreductase (210 aa).

150–155 (GVSLMG) serves as a coordination point for NADP(+).

Belongs to the nitroreductase family.

Functionally, reduction of a variety of nitroaromatic compounds using NADPH as source of reducing equivalents; two electrons are transferred. In Helicobacter pylori (strain J99 / ATCC 700824) (Campylobacter pylori J99), this protein is Oxygen-insensitive NADPH nitroreductase (rdxA).